The primary structure comprises 522 residues: Zinc finger protein STOP1 homolog (522 aa).

Composition is skewed to polar residues over residues 1 to 12 (MDSGLGRSSETS) and 19 to 40 (MASN…SSMD). Disordered regions lie at residues 1–43 (MDSG…DQPP) and 234–260 (CGGE…EREN). The span at 244–260 (MEDHDVKESDDGGEREN) shows a compositional bias: basic and acidic residues. The segment at 282–304 (HFCLICGKGFKRDANLRMHMRGH) adopts a C2H2-type 1 zinc-finger fold. A C2H2-type 2; atypical zinc finger spans residues 390-421 (KHCGRDKWLCSCGTTFSRKDKLFGHVALFQGH).

Its subcellular location is the nucleus. In terms of biological role, probable transcription factor that may be involved in aluminum tolerance. In Oryza sativa subsp. japonica (Rice), this protein is Zinc finger protein STOP1 homolog.